The following is a 256-amino-acid chain: UPF0246 protein HRM2_41860 (256 aa).

The protein belongs to the UPF0246 family.

This is UPF0246 protein HRM2_41860 from Desulforapulum autotrophicum (strain ATCC 43914 / DSM 3382 / VKM B-1955 / HRM2) (Desulfobacterium autotrophicum).